The sequence spans 909 residues: E3 ubiquitin-protein ligase HACE1 (909 aa).

Residues 1–21 (MERAMEQLNRLTRSLRRARTV) are N-terminal helix important for homodimerization. 7 ANK repeats span residues 23–55 (LPED…NSKF), 64–93 (VKRS…NPNY), 97–126 (SGCT…DVNI), 130–159 (EGLT…DVDV), 163–192 (MGQT…DINR), 196–226 (SGAT…YLPD), and 228–253 (NGVT…QYHP). The tract at residues 398–433 (QDQDAASIPPFEPPGPGSYENLSTGTRESKPDALAG) is disordered. The 336-residue stretch at 574-909 (NCAKLKQGIA…HCGSYGYTMA (336 aa)) folds into the HECT domain. Cys876 acts as the Glycyl thioester intermediate in catalysis.

Homodimer. The homodimer is autoinhibited and stabilized by its N-terminal helix. Interacts with RAB1 (RAB1A, RAB1B or RAB1C), RAB4 (RAB4A or RAB4B) and RAB11 (RAB11A or RAB11B); in a GTP-dependent manner. Interacts with the 26S proteasomal complex through the 20S core proteasomal subunit. Interacts with RARB. Post-translationally, autoubiquitinated. As to expression, expressed in multiple tissues including heart, brain and kidney.

Its subcellular location is the golgi apparatus. The protein localises to the golgi stack membrane. The protein resides in the cytoplasm. It is found in the endoplasmic reticulum. It catalyses the reaction S-ubiquitinyl-[E2 ubiquitin-conjugating enzyme]-L-cysteine + [acceptor protein]-L-lysine = [E2 ubiquitin-conjugating enzyme]-L-cysteine + N(6)-ubiquitinyl-[acceptor protein]-L-lysine.. It functions in the pathway protein modification; protein ubiquitination. Sterically autoinhibited in its dimeric state. In terms of biological role, E3 ubiquitin-protein ligase involved in Golgi membrane fusion and regulation of small GTPases. Acts as a regulator of Golgi membrane dynamics during the cell cycle: recruited to Golgi membrane by Rab proteins and regulates postmitotic Golgi membrane fusion. Acts by mediating ubiquitination during mitotic Golgi disassembly, ubiquitination serving as a signal for Golgi reassembly later, after cell division. Specifically binds GTP-bound RAC1, mediating ubiquitination and subsequent degradation of active RAC1, thereby playing a role in host defense against pathogens. May also act as a transcription regulator via its interaction with RARB. This chain is E3 ubiquitin-protein ligase HACE1 (HACE1), found in Homo sapiens (Human).